We begin with the raw amino-acid sequence, 373 residues long: Ribonuclease D (373 aa).

The 3'-5' exonuclease domain occupies 3 to 171; that stretch reads YQLITTDAGL…MAKRLVQETE (169 aa). Residues 210–289 form the HRDC domain; the sequence is RPRQLGCLQK…AEAAELEESA (80 aa).

This sequence belongs to the RNase D family. Requires a divalent metal cation as cofactor.

Its subcellular location is the cytoplasm. The enzyme catalyses Exonucleolytic cleavage that removes extra residues from the 3'-terminus of tRNA to produce 5'-mononucleotides.. In terms of biological role, exonuclease involved in the 3' processing of various precursor tRNAs. Initiates hydrolysis at the 3'-terminus of an RNA molecule and releases 5'-mononucleotides. The polypeptide is Ribonuclease D (Serratia proteamaculans (strain 568)).